Consider the following 754-residue polypeptide: Protein NUCLEOLAR FACTOR 1 (754 aa).

Disordered stretches follow at residues 1-56, 69-166, and 390-413; these read MAPN…EAMV, SLGS…ELST, and EDTD…QKSS. The segment covering 42–52 has biased composition (acidic residues); that stretch reads SPEESSIEAES. Basic and acidic residues predominate over residues 80 to 93; sequence MNKRRQREEEGKSD. Acidic residues-rich tracts occupy residues 94–110 and 138–161; these read TEED…ENSG and DTQE…DEEV. Residues 402-413 show a composition bias toward polar residues; the sequence is SKNGNSIKQKSS.

Belongs to the UTP25 family. In terms of assembly, component of the ribosomal small subunit (SSU) processome composed of at least 40 protein subunits and snoRNA U3. Interacts with THAL in the nucleus. In terms of tissue distribution, preferentially expressed in differentiating cells in young tissues such as floral buds, ovules, embryos, secondary roots, pollen, young seedlings and vascular bundles. Observed ubiquitously.

The protein resides in the nucleus. It localises to the nucleolus. Functionally, DEAD-box RNA helicase-like protein required for pre-18S rRNA processing, specifically at sites A0, A1, and A2. Involved in the control of rRNA expression. Required for embryo development and female gametogenesis. This is Protein NUCLEOLAR FACTOR 1 from Arabidopsis thaliana (Mouse-ear cress).